The sequence spans 643 residues: Cytoplasmic dynein 1 intermediate chain 1 (643 aa).

2 stretches are compositionally biased toward basic and acidic residues: residues 1-13 (MSDK…ELER) and 20-60 (QIRE…RETE). Disordered regions lie at residues 1 to 65 (MSDK…LLQS) and 96 to 123 (MSPS…RTLQ). Ser2 is modified (N-acetylserine). The interaction with DCTN1 stretch occupies residues 2–123 (SDKSDLKAEL…DLGPLTRTLQ (122 aa)). Phosphoserine is present on residues Ser50 and Ser100. The segment covering 96 to 107 (MSPSSKSVSTPS) has biased composition (low complexity). Thr105 is subject to Phosphothreonine. Residues Ser107 and Ser111 each carry the phosphoserine modification. The interval 145–161 (KLGVSKVTQVDFLPREV) is interaction with DYNLT1. The segment at 167–219 (ETQTPLATHQSEEDEEDEEMVEPKVGHDSELENQDKKQETKEAPPRELTEEEK) is disordered. A Phosphothreonine modification is found at Thr174. 2 positions are modified to phosphoserine: Ser177 and Ser195. The segment covering 187–219 (VEPKVGHDSELENQDKKQETKEAPPRELTEEEK) has biased composition (basic and acidic residues). WD repeat units follow at residues 283 to 332 (SKHR…TTPE), 336 to 376 (HCQS…RTPV), 385 to 426 (AHTH…TPQE), 435 to 475 (SKPV…AGIG), 480 to 525 (GHQG…PLYS), 528 to 568 (DNAD…EVPT), and 574 to 613 (EGAY…VPHN). Position 633 is a phosphoserine (Ser633).

The protein belongs to the dynein intermediate chain family. In terms of assembly, homodimer. The cytoplasmic dynein 1 complex consists of two catalytic heavy chains (HCs) and a number of non-catalytic subunits presented by intermediate chains (ICs), light intermediate chains (LICs) and light chains (LCs); the composition seems to vary in respect to the IC, LIC and LC composition. The heavy chain homodimer serves as a scaffold for the probable homodimeric assembly of the respective non-catalytic subunits. The ICs and LICs bind directly to the HC dimer and the LCs assemble on the IC dimer. Isoform 1, isoform 2 and isoform 3 interact with DYNC1H1. Isoform 1, isoform 2 and isoform 3 interact with DYNLT3. Isoform 1, isoform 2 and isoform 3 interact with DYNLT1. Interacts with DCTN1. Interacts with MCRS1; the interaction is required for the proper distribution of centriolar satellites. High levels seen in the brain and testis, while a lower level expression is seen in the liver, spleen, kidney, lung, skeletal muscle and heart.

The protein localises to the cytoplasm. It is found in the chromosome. It localises to the centromere. The protein resides in the kinetochore. Its subcellular location is the cytoskeleton. The protein localises to the spindle pole. Acts as one of several non-catalytic accessory components of the cytoplasmic dynein 1 complex that are thought to be involved in linking dynein to cargos and to adapter proteins that regulate dynein function. Cytoplasmic dynein 1 acts as a motor for the intracellular retrograde motility of vesicles and organelles along microtubules. The intermediate chains mediate the binding of dynein to dynactin via its 150 kDa component (p150-glued) DCTN1. May play a role in mediating the interaction of cytoplasmic dynein with membranous organelles and kinetochores. The chain is Cytoplasmic dynein 1 intermediate chain 1 (Dync1i1) from Rattus norvegicus (Rat).